The sequence spans 110 residues: Period circadian protein (110 aa).

Positions 23 to 97 (VTNTSIAGTG…GGAGGGGGVT (75 aa)) are disordered. Tandem repeats lie at residues 30 to 31 (GT), 33 to 34 (GT), 36 to 37 (GT), 38 to 39 (GT), 40 to 41 (GT), 42 to 43 (GT), 44 to 45 (GT), 46 to 47 (GT), 48 to 49 (GT), 50 to 51 (GT), 52 to 53 (GT), and 54 to 55 (GT). Over residues 30-63 (GTGGTGGTGTGTGTGTGTGTGTGTGTDTGTGTGT) the composition is skewed to gly residues. The segment at 30-79 (GTGGTGGTGTGTGTGTGTGTGTGTGTDTGTGTGTRNGTNSGTNSGTRTGT) is 24 X 2 AA approximate tandem repeats of G-T. Residues 56-57 (DT) form a 13; approximate repeat. 3 tandem repeats follow at residues 58-59 (GT), 60-61 (GT), and 62-63 (GT). One copy of the 17; approximate repeat lies at 64–65 (RN). The segment covering 64 to 83 (RNGTNSGTNSGTRTGTASSY) has biased composition (low complexity). Repeat 18 spans residues 66 to 67 (GT). A 19; approximate repeat occupies 68–69 (NS). Repeat 20 spans residues 70 to 71 (GT). Residues 72–73 (NS) form a 21; approximate repeat. The stretch at 74–75 (GT) is repeat 22. One copy of the 23; approximate repeat lies at 76-77 (RT). Residues 78–79 (GT) form repeat 24. Gly residues predominate over residues 84–96 (RGGGGGAGGGGGV).

As to quaternary structure, forms a heterodimer with timeless (TIM); the complex then translocates into the nucleus. Post-translationally, phosphorylated with a circadian rhythmicity, probably by the double-time protein (dbt). Phosphorylation could be implicated in the stability of per monomer and in the formation of heterodimer per-tim.

The protein localises to the nucleus. Its subcellular location is the cytoplasm. It localises to the perinuclear region. Essential for biological clock functions. Determines the period length of circadian and ultradian rhythms; an increase in PER dosage leads to shortened circadian rhythms and a decrease leads to lengthened circadian rhythms. Essential for the circadian rhythmicity of locomotor activity, eclosion behavior, and for the rhythmic component of the male courtship song that originates in the thoracic nervous system. The biological cycle depends on the rhythmic formation and nuclear localization of the TIM-PER complex. Light induces the degradation of TIM, which promotes elimination of PER. Nuclear activity of the heterodimer coordinatively regulates PER and TIM transcription through a negative feedback loop. Behaves as a negative element in circadian transcriptional loop. Does not appear to bind DNA, suggesting indirect transcriptional inhibition. This is Period circadian protein (per) from Drosophila erecta (Fruit fly).